Consider the following 362-residue polypeptide: Heat-inducible transcription repressor HrcA (362 aa).

This sequence belongs to the HrcA family.

Negative regulator of class I heat shock genes (grpE-dnaK-dnaJ and groELS operons). Prevents heat-shock induction of these operons. The protein is Heat-inducible transcription repressor HrcA of Nitrobacter hamburgensis (strain DSM 10229 / NCIMB 13809 / X14).